The following is a 296-amino-acid chain: Deleted in azoospermia-like (296 aa).

Polar residues predominate over residues 1–18 (MSAANPETPNSTISREAN). A disordered region spans residues 1–25 (MSAANPETPNSTISREANTQSSSAA). The RRM domain occupies 40-115 (NTVFVGGIDV…KKLKLGPAIR (76 aa)). A homodimerization region spans residues 80-132 (KGYGFVSFFNDVDVQKIVESQINFHGKKLKLGPAIRKQNLCAYHVQPRPLVFN). The region spanning 167–190 (AYPPYPNSPVQVITGYQLPVYNYQ) is the DAZ domain. Y277 carries the post-translational modification Phosphotyrosine.

It belongs to the RRM DAZ family. As to quaternary structure, homodimer and heterodimer. Forms a heterodimer with DAZ. Interacts with BOLL, DAZAP1 and DAZAP2. Interacts with PUM2 Multiple DAZL RRMs can bind to a single RNA containing multiple GUU triplets. In terms of tissue distribution, testis specific.

The protein resides in the cytoplasm. The protein localises to the nucleus. In terms of biological role, RNA-binding protein, which is essential for gametogenesis in both males and females. Plays a central role during spermatogenesis. Acts by binding to the 3'-UTR of mRNA, specifically recognizing GUU triplets, and thereby regulating the translation of key transcripts. This chain is Deleted in azoospermia-like (DAZL), found in Callithrix jacchus (White-tufted-ear marmoset).